The following is a 203-amino-acid chain: LexA repressor (203 aa).

A DNA-binding region (H-T-H motif) is located at residues 30–50 (VREICQAVSLKSTSTVHGHLK). Active-site for autocatalytic cleavage activity residues include S127 and K164.

The protein belongs to the peptidase S24 family. As to quaternary structure, homodimer.

It catalyses the reaction Hydrolysis of Ala-|-Gly bond in repressor LexA.. Its function is as follows. Represses a number of genes involved in the response to DNA damage (SOS response), including recA and lexA. In the presence of single-stranded DNA, RecA interacts with LexA causing an autocatalytic cleavage which disrupts the DNA-binding part of LexA, leading to derepression of the SOS regulon and eventually DNA repair. This Clostridium perfringens (strain 13 / Type A) protein is LexA repressor.